A 198-amino-acid chain; its full sequence is Protein RD3-like (198 aa).

A coiled-coil region spans residues 28–57; it reads KTLLRELKWHLKERERLIQEIENEQKVKKT. The segment at 133–168 is disordered; sequence GSEQEDLEDSGSMDCSAPSVIQGDSSKRADKDEIPT. Residues 157 to 166 show a composition bias toward basic and acidic residues; the sequence is SSKRADKDEI.

The protein is Protein RD3-like (RD3L) of Homo sapiens (Human).